A 466-amino-acid polypeptide reads, in one-letter code: Soluble pyridine nucleotide transhydrogenase (466 aa).

36–45 (ERYHNVGGGC) contacts FAD.

The protein belongs to the class-I pyridine nucleotide-disulfide oxidoreductase family. The cofactor is FAD.

The protein localises to the cytoplasm. It carries out the reaction NAD(+) + NADPH = NADH + NADP(+). Its function is as follows. Conversion of NADPH, generated by peripheral catabolic pathways, to NADH, which can enter the respiratory chain for energy generation. The polypeptide is Soluble pyridine nucleotide transhydrogenase (Salmonella paratyphi C (strain RKS4594)).